The primary structure comprises 211 residues: Octanoyltransferase (211 aa).

Residues 28–203 (GSAPETLLLV…HFQSLLKTWL (176 aa)) form the BPL/LPL catalytic domain. Residues 66–73 (RGGDITYH), 133–135 (SIG), and 146–148 (GFA) each bind substrate. C164 functions as the Acyl-thioester intermediate in the catalytic mechanism.

The protein belongs to the LipB family.

The protein resides in the cytoplasm. It carries out the reaction octanoyl-[ACP] + L-lysyl-[protein] = N(6)-octanoyl-L-lysyl-[protein] + holo-[ACP] + H(+). It functions in the pathway protein modification; protein lipoylation via endogenous pathway; protein N(6)-(lipoyl)lysine from octanoyl-[acyl-carrier-protein]: step 1/2. Its function is as follows. Catalyzes the transfer of endogenously produced octanoic acid from octanoyl-acyl-carrier-protein onto the lipoyl domains of lipoate-dependent enzymes. Lipoyl-ACP can also act as a substrate although octanoyl-ACP is likely to be the physiological substrate. The chain is Octanoyltransferase from Syntrophotalea carbinolica (strain DSM 2380 / NBRC 103641 / GraBd1) (Pelobacter carbinolicus).